The primary structure comprises 124 residues: S-adenosylmethionine decarboxylase proenzyme (124 aa).

The active-site Schiff-base intermediate with substrate; via pyruvic acid is the Ser70. Ser70 is subject to Pyruvic acid (Ser); by autocatalysis. The active-site Proton acceptor; for processing activity is His75. The active-site Proton donor; for catalytic activity is the Cys90.

This sequence belongs to the prokaryotic AdoMetDC family. Type 1 subfamily. In terms of assembly, heterotetramer of two alpha and two beta chains arranged as a dimer of alpha/beta heterodimers. It depends on pyruvate as a cofactor. Post-translationally, is synthesized initially as an inactive proenzyme. Formation of the active enzyme involves a self-maturation process in which the active site pyruvoyl group is generated from an internal serine residue via an autocatalytic post-translational modification. Two non-identical subunits are generated from the proenzyme in this reaction, and the pyruvate is formed at the N-terminus of the alpha chain, which is derived from the carboxyl end of the proenzyme. The post-translation cleavage follows an unusual pathway, termed non-hydrolytic serinolysis, in which the side chain hydroxyl group of the serine supplies its oxygen atom to form the C-terminus of the beta chain, while the remainder of the serine residue undergoes an oxidative deamination to produce ammonia and the pyruvoyl group blocking the N-terminus of the alpha chain.

It catalyses the reaction S-adenosyl-L-methionine + H(+) = S-adenosyl 3-(methylsulfanyl)propylamine + CO2. Its pathway is amine and polyamine biosynthesis; S-adenosylmethioninamine biosynthesis; S-adenosylmethioninamine from S-adenosyl-L-methionine: step 1/1. Its function is as follows. Catalyzes the decarboxylation of S-adenosylmethionine to S-adenosylmethioninamine (dcAdoMet), the propylamine donor required for the synthesis of the polyamines spermine and spermidine from the diamine putrescine. This chain is S-adenosylmethionine decarboxylase proenzyme, found in Pyrobaculum neutrophilum (strain DSM 2338 / JCM 9278 / NBRC 100436 / V24Sta) (Thermoproteus neutrophilus).